Reading from the N-terminus, the 113-residue chain is Tubulin-folding cofactor A (113 aa).

The tract at residues 83 to 113 (LEETDEKEGPEIEDAKKTVADVEKQFPTEDA) is disordered. The span at 89–113 (KEGPEIEDAKKTVADVEKQFPTEDA) shows a compositional bias: basic and acidic residues.

Belongs to the TBCA family. In terms of assembly, monomer. Supercomplex made of cofactors A to E. Cofactors A and D function by capturing and stabilizing tubulin in a quasi-native conformation. Cofactor E binds to the cofactor D-tubulin complex; interaction with cofactor C then causes the release of tubulin polypeptides that are committed to the native state. Interacts with TUBB9. As to expression, expressed in leaves, roots, flowers and stems.

Tubulin-folding protein involved in the control of the alpha-/beta-tubulin monomer balance. Functions as a reservoir of bound and non-toxic beta-tubulin. Required in the developing embryo. The chain is Tubulin-folding cofactor A (TFCA) from Arabidopsis thaliana (Mouse-ear cress).